A 134-amino-acid chain; its full sequence is Small ribosomal subunit protein uS8c (134 aa).

It belongs to the universal ribosomal protein uS8 family. In terms of assembly, part of the 30S ribosomal subunit.

The protein resides in the plastid. Its subcellular location is the chloroplast. In terms of biological role, one of the primary rRNA binding proteins, it binds directly to 16S rRNA central domain where it helps coordinate assembly of the platform of the 30S subunit. This is Small ribosomal subunit protein uS8c (rps8) from Lepidium virginicum (Virginia pepperweed).